We begin with the raw amino-acid sequence, 427 residues long: MEAMAASTSLPDPGDFDRNVPRICGVCGDRATGFHFNAMTCEGCKGFFRRSMKRKALFTCPFNGDCRITKDNRRHCQACRLKRCVDIGMMKEFILTDEEVQRKREMILKRKEEEALKDSLRPKLSEEQQRIIAILLDAHHKTYDPTYSDFCQFRPPVRVNDGGGSHPSRPNSRHTPSFSGDSSSCCSDHYITSPDMMDSSSFSNLDLSEEDSDDPSLTLELSQLSMLPHLADLVSYSIQKVIGFAKMIPGFRDLTSEDQIVLLKSSAIEVIMLRSNESFTMDDMSWTCGNPDYKYRISDVTKAGHNLELIEPLIKFQVGLKKLNLHEEEHVLLMAICIVSPDRPGVQDAALIEAIQDRLSNTLQTYIRCRHPPPGSHLLYAKMIQKLADLRSLNEEHSKQYRCLSFQPESSMKLTPLVLEVFGNEIS.

The segment at residues 21–96 (PRICGVCGDR…IGMMKEFILT (76 aa)) is a DNA-binding region (nuclear receptor). Residues Cys-24, Cys-27, Cys-41, Cys-44, Cys-60, Cys-66, Cys-76, and Cys-79 each coordinate Zn(2+). 2 consecutive NR C4-type zinc fingers follow at residues 24–44 (CGVCGDRATGFHFNAMTCEGC) and 60–84 (CPFNGDCRITKDNRRHCQACRLKRC). Residues 97–126 (DEEVQRKREMILKRKEEEALKDSLRPKLSE) form a hinge region. In terms of domain architecture, NR LBD spans 127-423 (EQQRIIAILL…LTPLVLEVFG (297 aa)). Tyr-143 contributes to the calcitriol binding site. A disordered region spans residues 158 to 183 (RVNDGGGSHPSRPNSRHTPSFSGDSS). Ser-237 is a calcitriol binding site. An interaction with coactivator LXXLL motif region spans residues 246–264 (KMIPGFRDLTSEDQIVLLK). Calcitriol is bound by residues Arg-274, Ser-278, His-305, and His-397. Positions 416–424 (PLVLEVFGN) match the 9aaTAD motif.

It belongs to the nuclear hormone receptor family. NR1 subfamily. Homodimer in the absence of bound vitamin D3. Heterodimer with RXRA after vitamin D3 binding. Interacts with MED1, NCOA1, NCOA2, NCOA3 and NCOA6 coactivators, leading to a strong increase of transcription of target genes. Interacts with the corepressor NCOR1. Interacts with SNW1. Interacts with IRX4, the interaction does not affect its transactivation activity. Post-translationally, ubiquitinated by UBR5, leading to its degradation: UBR5 specifically recognizes and binds ligand-bound VDR when it is not associated with coactivators (NCOAs). In presence of NCOAs, the UBR5-degron is not accessible, preventing its ubiquitination and degradation.

It is found in the nucleus. The protein localises to the cytoplasm. Its function is as follows. Nuclear receptor for calcitriol, the active form of vitamin D3 which mediates the action of this vitamin on cells. Enters the nucleus upon vitamin D3 binding where it forms heterodimers with the retinoid X receptor/RXR. The VDR-RXR heterodimers bind to specific response elements on DNA and activate the transcription of vitamin D3-responsive target genes. Plays a central role in calcium homeostasis. The sequence is that of Vitamin D3 receptor (VDR) from Saguinus oedipus (Cotton-top tamarin).